The primary structure comprises 534 residues: Probable glycine dehydrogenase (decarboxylating) subunit 2 (534 aa).

Position 273 is an N6-(pyridoxal phosphate)lysine (lysine 273).

Belongs to the GcvP family. C-terminal subunit subfamily. In terms of assembly, the glycine cleavage system is composed of four proteins: P, T, L and H. In this organism, the P 'protein' is a heterodimer of two subunits. It depends on pyridoxal 5'-phosphate as a cofactor.

The catalysed reaction is N(6)-[(R)-lipoyl]-L-lysyl-[glycine-cleavage complex H protein] + glycine + H(+) = N(6)-[(R)-S(8)-aminomethyldihydrolipoyl]-L-lysyl-[glycine-cleavage complex H protein] + CO2. Its function is as follows. The glycine cleavage system catalyzes the degradation of glycine. The P protein binds the alpha-amino group of glycine through its pyridoxal phosphate cofactor; CO(2) is released and the remaining methylamine moiety is then transferred to the lipoamide cofactor of the H protein. The chain is Probable glycine dehydrogenase (decarboxylating) subunit 2 from Bacillus cereus (strain ATCC 14579 / DSM 31 / CCUG 7414 / JCM 2152 / NBRC 15305 / NCIMB 9373 / NCTC 2599 / NRRL B-3711).